Consider the following 284-residue polypeptide: Mevalonate kinase (284 aa).

86-96 provides a ligand contact to ATP; sequence PIGSGLGSSAA. The Proton acceptor role is filled by aspartate 137.

The protein belongs to the GHMP kinase family. Mevalonate kinase subfamily. Homodimer. Requires Mg(2+) as cofactor.

It is found in the cytoplasm. The catalysed reaction is (R)-mevalonate + ATP = (R)-5-phosphomevalonate + ADP + H(+). The protein operates within isoprenoid biosynthesis; isopentenyl diphosphate biosynthesis via mevalonate pathway; isopentenyl diphosphate from (R)-mevalonate: step 1/3. In terms of biological role, catalyzes the phosphorylation of (R)-mevalonate (MVA) to (R)-mevalonate 5-phosphate (MVAP). Functions in the mevalonate (MVA) pathway leading to isopentenyl diphosphate (IPP), a key precursor for the biosynthesis of isoprenoid compounds such as archaeal membrane lipids. This is Mevalonate kinase from Archaeoglobus fulgidus (strain ATCC 49558 / DSM 4304 / JCM 9628 / NBRC 100126 / VC-16).